Reading from the N-terminus, the 233-residue chain is Protein Atu3128 (233 aa).

It belongs to the glycosyl hydrolase 88 family.

In terms of biological role, seems to regulate the surface properties of the bacterium in the presence of plant cells or plant cell extracts. Mutations in this protein are responsible for an increased aggregation of the bacteria in the presence of pea root cap cells. The polypeptide is Protein Atu3128 (Agrobacterium fabrum (strain C58 / ATCC 33970) (Agrobacterium tumefaciens (strain C58))).